A 92-amino-acid chain; its full sequence is Small ribosomal subunit protein uS19c (92 aa).

It belongs to the universal ribosomal protein uS19 family.

It localises to the plastid. Its subcellular location is the chloroplast. Its function is as follows. Protein S19 forms a complex with S13 that binds strongly to the 16S ribosomal RNA. The protein is Small ribosomal subunit protein uS19c of Piper cenocladum (Ant piper).